A 219-amino-acid chain; its full sequence is Protein-methionine-sulfoxide reductase heme-binding subunit MsrQ (219 aa).

5 consecutive transmembrane segments (helical) span residues 17-37 (AKPL…YAAW), 88-108 (LFAY…DMGF), 121-141 (PFIL…ATSF), 153-173 (WQLL…HFFW), and 184-204 (VFVY…NHWA).

The protein belongs to the MsrQ family. Heterodimer of a catalytic subunit (MsrP) and a heme-binding subunit (MsrQ). The cofactor is FMN. Heme b is required as a cofactor.

The protein localises to the cell inner membrane. Functionally, part of the MsrPQ system that repairs oxidized periplasmic proteins containing methionine sulfoxide residues (Met-O), using respiratory chain electrons. Thus protects these proteins from oxidative-stress damage caused by reactive species of oxygen and chlorine generated by the host defense mechanisms. MsrPQ is essential for the maintenance of envelope integrity under bleach stress, rescuing a wide series of structurally unrelated periplasmic proteins from methionine oxidation. MsrQ provides electrons for reduction to the reductase catalytic subunit MsrP, using the quinone pool of the respiratory chain. The sequence is that of Protein-methionine-sulfoxide reductase heme-binding subunit MsrQ from Polaromonas naphthalenivorans (strain CJ2).